A 412-amino-acid chain; its full sequence is DNA replication and repair protein RecF (412 aa).

An ATP-binding site is contributed by 30–37; that stretch reads GKNGLGKT.

The protein belongs to the RecF family.

The protein resides in the cytoplasm. Functionally, the RecF protein is involved in DNA metabolism; it is required for DNA replication and normal SOS inducibility. RecF binds preferentially to single-stranded, linear DNA. It also seems to bind ATP. The polypeptide is DNA replication and repair protein RecF (Bifidobacterium longum subsp. infantis (strain ATCC 15697 / DSM 20088 / JCM 1222 / NCTC 11817 / S12)).